Consider the following 178-residue polypeptide: Ribosome maturation factor RimM (178 aa).

Positions 94-174 (KNEFFWFDLI…RIDVINSFDI (81 aa)) constitute a PRC barrel domain.

The protein belongs to the RimM family. In terms of assembly, binds ribosomal protein uS19.

The protein localises to the cytoplasm. Its function is as follows. An accessory protein needed during the final step in the assembly of 30S ribosomal subunit, possibly for assembly of the head region. Essential for efficient processing of 16S rRNA. May be needed both before and after RbfA during the maturation of 16S rRNA. It has affinity for free ribosomal 30S subunits but not for 70S ribosomes. The chain is Ribosome maturation factor RimM from Aliarcobacter butzleri (strain RM4018) (Arcobacter butzleri).